Consider the following 233-residue polypeptide: Glutathione S-transferase 2 (233 aa).

Residues 17–101 (QKMIIYDTPA…YIDALDGTPT (85 aa)) form the GST N-terminal domain. Residues Tyr29, His58, Val72, 85–86 (EC), and His133 each bind glutathione. The GST C-terminal domain occupies 106–233 (TPLEKGVIHM…KLLEIRSKSS (128 aa)).

Belongs to the GST superfamily. Homodimer.

It catalyses the reaction RX + glutathione = an S-substituted glutathione + a halide anion + H(+). This Saccharomyces cerevisiae (strain ATCC 204508 / S288c) (Baker's yeast) protein is Glutathione S-transferase 2 (GTT2).